Here is a 206-residue protein sequence, read N- to C-terminus: Isochorismatase family protein 1A (206 aa).

Belongs to the isochorismatase family.

The polypeptide is Isochorismatase family protein 1A (Dictyostelium discoideum (Social amoeba)).